A 221-amino-acid chain; its full sequence is NEP1-interacting protein-like 1 (221 aa).

Transmembrane regions (helical) follow at residues 35 to 55 (LFTF…GALI), 69 to 89 (VGAI…LLLW), and 95 to 115 (GIGC…GRLV). An RING-type; atypical zinc finger spans residues 176–218 (CSVCLQDFQVGETVRSLPHCHHMFHLPCIDKWLRRHASCPLCR).

Belongs to the RING-type zinc finger family. NIP subfamily.

It localises to the membrane. Its function is as follows. May be involved in the early steps of the plant defense signaling pathway. This is NEP1-interacting protein-like 1 (ATL27) from Arabidopsis thaliana (Mouse-ear cress).